The primary structure comprises 312 residues: Malate dehydrogenase (312 aa).

NAD(+)-binding positions include 7 to 13 (GAAGGIG) and aspartate 34. Residues arginine 81 and arginine 87 each contribute to the substrate site. Residues asparagine 94 and 117–119 (ITN) each bind NAD(+). Substrate contacts are provided by asparagine 119 and arginine 153. The active-site Proton acceptor is the histidine 177. Position 227 (methionine 227) interacts with NAD(+).

Belongs to the LDH/MDH superfamily. MDH type 1 family. In terms of assembly, homodimer.

It catalyses the reaction (S)-malate + NAD(+) = oxaloacetate + NADH + H(+). Its function is as follows. Catalyzes the reversible oxidation of malate to oxaloacetate. The polypeptide is Malate dehydrogenase (Escherichia coli (strain 55989 / EAEC)).